The primary structure comprises 296 residues: MRTPVVMTLGMVLTPCGLLLNLVSTLAPGWRLVKGFLDQPVDVVLYQGLWDICREQSSRERECGQPDEWNYFQTQPVQVARGLMITSLATTALGLLLASLGVRCWQDEPHYGLAGLSGVVFFVAGLFSLIPVSWYNHFLSDPDVLAAPSSPVTVQVSYSLVLGYLGSCLLLLGGFSLALSFAPWCEERCRRCRKAPPAGPRRSSISTVYVDWPEPALTPAIKYYSDGQHRPPPTAEHRDTSKLKVGFPMPRPPPKSYTNPMDVLEGEEKKTATSQGGSSSRSTRPCQNSLPCDSDL.

Over 1–2 (MR) the chain is Cytoplasmic. The chain crosses the membrane as a helical span at residues 3-23 (TPVVMTLGMVLTPCGLLLNLV). The Extracellular portion of the chain corresponds to 24-81 (STLAPGWRLVKGFLDQPVDVVLYQGLWDICREQSSRERECGQPDEWNYFQTQPVQVAR). The helical transmembrane segment at 82 to 102 (GLMITSLATTALGLLLASLGV) threads the bilayer. At 103 to 111 (RCWQDEPHY) the chain is on the cytoplasmic side. The helical transmembrane segment at 112–132 (GLAGLSGVVFFVAGLFSLIPV) threads the bilayer. Topologically, residues 133–160 (SWYNHFLSDPDVLAAPSSPVTVQVSYSL) are extracellular. Residues 161-181 (VLGYLGSCLLLLGGFSLALSF) traverse the membrane as a helical segment. Over 182–296 (APWCEERCRR…QNSLPCDSDL (115 aa)) the chain is Cytoplasmic. Residues 224-296 (YSDGQHRPPP…QNSLPCDSDL (73 aa)) are disordered. Over residues 273 to 284 (TSQGGSSSRSTR) the composition is skewed to low complexity. A compositionally biased stretch (polar residues) spans 285-296 (PCQNSLPCDSDL).

This sequence belongs to the claudin family.

Its subcellular location is the cell junction. The protein localises to the tight junction. It localises to the cell membrane. Its function is as follows. Plays a major role in tight junction-specific obliteration of the intercellular space, through calcium-independent cell-adhesion activity. The sequence is that of Claudin-23 (Cldn23) from Mus musculus (Mouse).